The sequence spans 123 residues: MQPNDITFYQRFEADILAGHKTISIRDDSESHFKAGDILRVGRFEDNQYFCNIEVLSVSPITLDELTQPHAKQENMGLDELKEVIRGIYPNEIIFWVIQFSLKEYFNEEKCVREIIITDRKFN.

An ASCH domain is found at 6–101 (ITFYQRFEAD…EIIFWVIQFS (96 aa)). K21 functions as the Proton acceptor in the catalytic mechanism. The active-site Nucleophile is S24. E74 serves as the catalytic Proton donor.

It belongs to the N(4)-acetylcytidine amidohydrolase family.

It carries out the reaction N(4)-acetylcytidine + H2O = cytidine + acetate + H(+). The catalysed reaction is N(4)-acetyl-2'-deoxycytidine + H2O = 2'-deoxycytidine + acetate + H(+). The enzyme catalyses N(4)-acetylcytosine + H2O = cytosine + acetate + H(+). In terms of biological role, catalyzes the hydrolysis of N(4)-acetylcytidine (ac4C). The sequence is that of N(4)-acetylcytidine amidohydrolase from Haemophilus influenzae (strain ATCC 51907 / DSM 11121 / KW20 / Rd).